A 477-amino-acid chain; its full sequence is Multidrug resistance protein PmpM (477 aa).

The next 12 membrane-spanning stretches (helical) occupy residues 21-41, 56-76, 104-124, 133-153, 171-191, 202-222, 253-273, 286-306, 326-346, 360-380, 398-418, and 431-451; these read LLTLAAPIMIAQLATTAMGFV, AVALGNSIWIPMFLLMTGTLL, LALLIGPLSGAVLWWLSEPIL, LIGPSLLYLKGIALGFPAAAL, MVLGIGGLLLNIPINYALIYG, GCGWATGSVMWFMFLGMLFWV, LPIGIAVFAESSIFSVIALLI, IALNFSALVFMIPYSLGMAVT, GVGMAAALGYACVSASLMLLL, VIAIAASLIVFSALFQFSDAL, MIMTLFAYWGIGLPVGYSLGL, and LWQGLVVGLTGAAIMLCIRLA.

The protein belongs to the multi antimicrobial extrusion (MATE) (TC 2.A.66.1) family.

The protein resides in the cell inner membrane. Functionally, multidrug efflux pump that functions as an H(+)/drug antiporter. Confers resistance to benzalkonium chloride, fluoroquinolones, ethidium bromide, acriflavine and tetraphenylphosphonium chloride. This Pseudomonas aeruginosa (strain ATCC 15692 / DSM 22644 / CIP 104116 / JCM 14847 / LMG 12228 / 1C / PRS 101 / PAO1) protein is Multidrug resistance protein PmpM (pmpM).